The following is an 82-amino-acid chain: ATP synthase subunit c, chloroplastic (82 aa).

Helical transmembrane passes span 7–27 (GASVIAAGLAIGLASIGPGIG) and 57–77 (LAFMESLTIYGLVVALCLLFA).

It belongs to the ATPase C chain family. In terms of assembly, F-type ATPases have 2 components, F(1) - the catalytic core - and F(0) - the membrane proton channel. F(1) has five subunits: alpha(3), beta(3), gamma(1), delta(1), epsilon(1). F(0) has four main subunits: a(1), b(1), b'(1) and c(10-14). The alpha and beta chains form an alternating ring which encloses part of the gamma chain. F(1) is attached to F(0) by a central stalk formed by the gamma and epsilon chains, while a peripheral stalk is formed by the delta, b and b' chains.

It localises to the plastid. Its subcellular location is the chloroplast thylakoid membrane. In terms of biological role, f(1)F(0) ATP synthase produces ATP from ADP in the presence of a proton or sodium gradient. F-type ATPases consist of two structural domains, F(1) containing the extramembraneous catalytic core and F(0) containing the membrane proton channel, linked together by a central stalk and a peripheral stalk. During catalysis, ATP synthesis in the catalytic domain of F(1) is coupled via a rotary mechanism of the central stalk subunits to proton translocation. Its function is as follows. Key component of the F(0) channel; it plays a direct role in translocation across the membrane. A homomeric c-ring of between 10-14 subunits forms the central stalk rotor element with the F(1) delta and epsilon subunits. This Emiliania huxleyi (Coccolithophore) protein is ATP synthase subunit c, chloroplastic.